Here is a 358-residue protein sequence, read N- to C-terminus: Histidinol-phosphate aminotransferase (358 aa).

The residue at position 218 (Lys-218) is an N6-(pyridoxal phosphate)lysine.

This sequence belongs to the class-II pyridoxal-phosphate-dependent aminotransferase family. Histidinol-phosphate aminotransferase subfamily. Homodimer. The cofactor is pyridoxal 5'-phosphate.

It catalyses the reaction L-histidinol phosphate + 2-oxoglutarate = 3-(imidazol-4-yl)-2-oxopropyl phosphate + L-glutamate. It participates in amino-acid biosynthesis; L-histidine biosynthesis; L-histidine from 5-phospho-alpha-D-ribose 1-diphosphate: step 7/9. The polypeptide is Histidinol-phosphate aminotransferase (Dehalococcoides mccartyi (strain CBDB1)).